A 682-amino-acid chain; its full sequence is Glutamine--fructose-6-phosphate aminotransferase [isomerizing] 2 (682 aa).

The For GATase activity role is filled by C2. Residues 2–288 form the Glutamine amidotransferase type-2 domain; it reads CGIFAYMNYR…DDDIAAVADG (287 aa). S244 carries the phosphoserine modification. SIS domains follow at residues 360–499 and 531–672; these read HLKE…DRIS and LALE…VDFP. Residues 377 to 378, 422 to 424, T427, and H578 contribute to the substrate site; these read TS and SQS.

The enzyme catalyses D-fructose 6-phosphate + L-glutamine = D-glucosamine 6-phosphate + L-glutamate. Its pathway is nucleotide-sugar biosynthesis; UDP-N-acetyl-alpha-D-glucosamine biosynthesis; alpha-D-glucosamine 6-phosphate from D-fructose 6-phosphate: step 1/1. Controls the flux of glucose into the hexosamine pathway. Most likely involved in regulating the availability of precursors for N- and O-linked glycosylation of proteins. This Mus musculus (Mouse) protein is Glutamine--fructose-6-phosphate aminotransferase [isomerizing] 2 (Gfpt2).